The sequence spans 358 residues: Trace amine-associated receptor 7d (358 aa).

Residues 1-47 (MRVDDDRFPWDQDSILSRDLLSASSLQLCYENLNRSCVRSPYSPGPR) lie on the Extracellular side of the membrane. N-linked (GlcNAc...) asparagine glycosylation is present at N34. Cystine bridges form between C37/C201 and C120/C205. The helical transmembrane segment at 48 to 68 (LILYAVFGFGAVLAVCGNLMV) threads the bilayer. The Cytoplasmic segment spans residues 69-83 (MTSILHFRQLHSPAN). The helical transmembrane segment at 84–104 (FLVASLACADFLVGLTVMPFS) threads the bilayer. Topologically, residues 105 to 122 (MVRSVEGCWYFGDTYCKL) are extracellular. The helical transmembrane segment at 123-143 (HTCFDVSFCYCSLFHLCFISV) threads the bilayer. Over 144 to 166 (DRYIAVSDPLIYPTRFTASVSGK) the chain is Cytoplasmic. Residues 167–187 (CITFSWLLSIIYGFPLIYTGA) form a helical membrane-spanning segment. The Extracellular segment spans residues 188–212 (SEAGLEDLVSALTCVGGCQIPMNQK). Residues 213-233 (FVLINFLLFLVPTLVMMTVYS) traverse the membrane as a helical segment. At 234-274 (KIFLIARQQAQNIEKMRKQTARASESYKDRVCKRERKAAKT) the chain is on the cytoplasmic side. Residues 275–295 (LGIAVAAFLLSWLPYFIDSII) form a helical membrane-spanning segment. The Extracellular portion of the chain corresponds to 296–309 (DAFLGFITPTYVYE). A helical transmembrane segment spans residues 310 to 333 (ILIWIVYYNSSMNPLIYAFFYPWF). Residues 334 to 358 (RKATKLIVTGKILRENSSTINLFPE) lie on the Cytoplasmic side of the membrane.

Belongs to the G-protein coupled receptor 1 family.

The protein localises to the cell membrane. Its function is as follows. Olfactory receptor specific for N,N-dimethylalkylamines trace amines, such as N,N-dimethylcyclohexylamine. Trace amine compounds are enriched in animal body fluids and act on trace amine-associated receptors (TAARs) to elicit both intraspecific and interspecific innate behaviors. Ligand-binding causes a conformation change that triggers signaling via G(s)-class of G alpha proteins (GNAL or GNAS). The sequence is that of Trace amine-associated receptor 7d from Rattus norvegicus (Rat).